We begin with the raw amino-acid sequence, 353 residues long: UDP-N-acetylglucosamine--N-acetylmuramyl-(pentapeptide) pyrophosphoryl-undecaprenol N-acetylglucosamine transferase (353 aa).

UDP-N-acetyl-alpha-D-glucosamine contacts are provided by residues 10–12 (TGG), N124, S183, and Q283.

The protein belongs to the glycosyltransferase 28 family. MurG subfamily.

It is found in the cell inner membrane. The catalysed reaction is di-trans,octa-cis-undecaprenyl diphospho-N-acetyl-alpha-D-muramoyl-L-alanyl-D-glutamyl-meso-2,6-diaminopimeloyl-D-alanyl-D-alanine + UDP-N-acetyl-alpha-D-glucosamine = di-trans,octa-cis-undecaprenyl diphospho-[N-acetyl-alpha-D-glucosaminyl-(1-&gt;4)]-N-acetyl-alpha-D-muramoyl-L-alanyl-D-glutamyl-meso-2,6-diaminopimeloyl-D-alanyl-D-alanine + UDP + H(+). The protein operates within cell wall biogenesis; peptidoglycan biosynthesis. Functionally, cell wall formation. Catalyzes the transfer of a GlcNAc subunit on undecaprenyl-pyrophosphoryl-MurNAc-pentapeptide (lipid intermediate I) to form undecaprenyl-pyrophosphoryl-MurNAc-(pentapeptide)GlcNAc (lipid intermediate II). The chain is UDP-N-acetylglucosamine--N-acetylmuramyl-(pentapeptide) pyrophosphoryl-undecaprenol N-acetylglucosamine transferase from Helicobacter pylori (strain J99 / ATCC 700824) (Campylobacter pylori J99).